A 369-amino-acid chain; its full sequence is Chorismate synthase (369 aa).

Positions 48 and 54 each coordinate NADP(+). FMN contacts are provided by residues 125–127, 238–239, glycine 278, 293–297, and arginine 319; these read RSS, NA, and KPTSS.

Belongs to the chorismate synthase family. Homotetramer. FMNH2 is required as a cofactor.

It carries out the reaction 5-O-(1-carboxyvinyl)-3-phosphoshikimate = chorismate + phosphate. Its pathway is metabolic intermediate biosynthesis; chorismate biosynthesis; chorismate from D-erythrose 4-phosphate and phosphoenolpyruvate: step 7/7. Its function is as follows. Catalyzes the anti-1,4-elimination of the C-3 phosphate and the C-6 proR hydrogen from 5-enolpyruvylshikimate-3-phosphate (EPSP) to yield chorismate, which is the branch point compound that serves as the starting substrate for the three terminal pathways of aromatic amino acid biosynthesis. This reaction introduces a second double bond into the aromatic ring system. This chain is Chorismate synthase, found in Burkholderia pseudomallei (strain 1106a).